Consider the following 429-residue polypeptide: Cytochrome bc1 complex Rieske iron-sulfur subunit (429 aa).

Positions 1–45 are disordered; the sequence is MSRADDDAVGVPPTCGGRSDEEERRIVPGPNPQDGAKDGAKATAV. Transmembrane regions (helical) follow at residues 96–116, 137–157, and 207–227; these read VAVW…IFLF, PLYG…AVLY, and FGVG…GGLI. The 95-residue stretch at 316–410 folds into the Rieske domain; that stretch reads RNPVMLIRIK…ITIDTDGYLV (95 aa). Cysteine 353, histidine 355, cysteine 372, and histidine 375 together coordinate [2Fe-2S] cluster. A disulfide bridge connects residues cysteine 358 and cysteine 374.

This sequence belongs to the Rieske iron-sulfur protein family. The cytochrome bc1 complex is composed of a cytochrome b (QcrB), the Rieske iron-sulfur protein (QcrA) and a diheme cytochrome c (QcrC) subunit. [2Fe-2S] cluster is required as a cofactor.

The protein resides in the cell membrane. Its function is as follows. Iron-sulfur subunit of the cytochrome bc1 complex, an essential component of the respiratory electron transport chain required for ATP synthesis. The bc1 complex catalyzes the oxidation of menaquinol and the reduction of cytochrome c in the respiratory chain. The bc1 complex operates through a Q-cycle mechanism that couples electron transfer to generation of the proton gradient that drives ATP synthesis. The sequence is that of Cytochrome bc1 complex Rieske iron-sulfur subunit (qcrA) from Mycobacterium bovis (strain ATCC BAA-935 / AF2122/97).